The sequence spans 342 residues: MSAPDGPLARLEARLTREWQRRGALAWALTPFACVFGLCAALRRTAYAQGWKKPVDVGVPVVVVGNVTVGGTGKTPTVIALVDALRAAGFTPGIVSRGYGANVKAPTAVTTASRASAGGDEPLLIARRTGAPVWVCPDRVAAAQALRAAHPDVDVIVSDDGLQHYRLARTVELVVFDHRLGGNGFLLPAGPLREPLSRHRDATLVNDPYSGALPPWPDTYSLALTPGAAWHLDQPALRRPLSQFANERVLAAAGIGAPERFFATLRSAGLAPATRALPDHYAFADNPFVDDAVDAILITEKDAVKLGASWRDARLWVVPVEAALDPRLIALVVEKLRGRSPA.

68–75 (TVGGTGKT) is a binding site for ATP.

The protein belongs to the LpxK family.

The enzyme catalyses a lipid A disaccharide + ATP = a lipid IVA + ADP + H(+). The protein operates within glycolipid biosynthesis; lipid IV(A) biosynthesis; lipid IV(A) from (3R)-3-hydroxytetradecanoyl-[acyl-carrier-protein] and UDP-N-acetyl-alpha-D-glucosamine: step 6/6. Transfers the gamma-phosphate of ATP to the 4'-position of a tetraacyldisaccharide 1-phosphate intermediate (termed DS-1-P) to form tetraacyldisaccharide 1,4'-bis-phosphate (lipid IVA). In Burkholderia lata (strain ATCC 17760 / DSM 23089 / LMG 22485 / NCIMB 9086 / R18194 / 383), this protein is Tetraacyldisaccharide 4'-kinase.